The chain runs to 175 residues: uncharacterized protein (175 aa).

Positions 1 to 22 (MNRIVGILISILMLACIGVTMA) are cleaved as a signal peptide.

This is an uncharacterized protein from Archaeoglobus fulgidus (strain ATCC 49558 / DSM 4304 / JCM 9628 / NBRC 100126 / VC-16).